Consider the following 122-residue polypeptide: Large ribosomal subunit protein uL14c (122 aa).

Belongs to the universal ribosomal protein uL14 family. Part of the 50S ribosomal subunit.

The protein resides in the plastid. Its subcellular location is the chloroplast. In terms of biological role, binds to 23S rRNA. This is Large ribosomal subunit protein uL14c from Liriodendron tulipifera (Tuliptree).